Here is a 290-residue protein sequence, read N- to C-terminus: Cilia- and flagella-associated protein 298 (290 aa).

Belongs to the CFAP298 family. In terms of assembly, interacts with ZMYND10. In terms of tissue distribution, expressed in the trachea (at protein level).

The protein localises to the cytoplasm. It localises to the cytoskeleton. It is found in the cilium basal body. In terms of biological role, plays a role in motile cilium function, possibly by acting on outer dynein arm assembly. Seems to be important for initiation rather than maintenance of cilium motility. Required for correct positioning of cilia at the apical cell surface, suggesting an additional role in the planar cell polarity (PCP) pathway. May suppress canonical Wnt signaling activity. In Rattus norvegicus (Rat), this protein is Cilia- and flagella-associated protein 298.